The sequence spans 750 residues: MARTLYDKVLEDHIIDRQEYGTCLIYIDRHLVHEVTSPQAFEGLRNAGRPVRRPDCTLATVDHNIPTSPRRNFKDIATFIKEGDSSTQCETLGENIEAFGLTYFGMEDSRQGIVHVIGPEQGFTLPGTTVVCGDSHTSTHGAFGALAFGIGTSEVEHVLATQTLLQKKSKNMRIRVEGKPSAGVTSKDIALHVIGVIGTAGGTGCVIEFCGEANESLSMESRMSICNMSIEAGARAGMIAPDDITFEYLCNKPLASKGEEWDRAVAYWKTLKFDADAQYDITVDIKASDIAPTVTWGTSPQDVAPITGKTPDLDSIADPLRRLAVQRALDYIGIASNTPLEGVKIDKVFIGSCTNSRIEDLGPAAAIVKGKRVADWVDAMVVPGSALVKRQAERKGLDKIFQEAGFNWREAGCSMCLGMNPDQLKPGERCASTSNRNFKGRQGAGGRTHLLSPAMAAAAGIKGCLTDVRHMEVAGIALTGNESPRQEVVASKYDGSPEVFKSTQDTTPAVKPPQPASDSSSSGGMPAFTTLKGYAAPLDISNIDTDMIIPKQFLKTIKRTGLGSALFYSLRFDPQTGAENPAFVLKERTFRQARILVCTGPNFGCGSSREHAPWAFNDFGIRCILAPSFADIFFNNCFKNGMLPIVLPQAQLEAIAAEAQKGVEVEVDLVQQIVRNPGGEVSFDVEEFRKHCLVNGLDDIGLTMQKADKIAQFETKRTQTWPWLDGKGYKGKATKIEINGGQQKKAKLDW.

Residues C353, C413, and C416 each contribute to the [4Fe-4S] cluster site. The interval 492-524 (KYDGSPEVFKSTQDTTPAVKPPQPASDSSSSGG) is disordered.

It belongs to the aconitase/IPM isomerase family. As to quaternary structure, monomer. Requires [4Fe-4S] cluster as cofactor.

The enzyme catalyses (2R,3S)-3-isopropylmalate = (2S)-2-isopropylmalate. It functions in the pathway amino-acid biosynthesis; L-leucine biosynthesis; L-leucine from 3-methyl-2-oxobutanoate: step 2/4. Catalyzes the isomerization between 2-isopropylmalate and 3-isopropylmalate, via the formation of 2-isopropylmaleate. The chain is 3-isopropylmalate dehydratase (LEU1) from Rhizopus niveus.